We begin with the raw amino-acid sequence, 274 residues long: Dermonecrotic toxin SdSicTox-betaIIB1bii (274 aa).

His-5 is a catalytic residue. Mg(2+) contacts are provided by Glu-25 and Asp-27. The active-site Nucleophile is His-41. Disulfide bonds link Cys-45–Cys-51 and Cys-47–Cys-190. Mg(2+) is bound at residue Asp-85.

It belongs to the arthropod phospholipase D family. Class II subfamily. It depends on Mg(2+) as a cofactor. As to expression, expressed by the venom gland.

Its subcellular location is the secreted. It catalyses the reaction an N-(acyl)-sphingosylphosphocholine = an N-(acyl)-sphingosyl-1,3-cyclic phosphate + choline. The catalysed reaction is an N-(acyl)-sphingosylphosphoethanolamine = an N-(acyl)-sphingosyl-1,3-cyclic phosphate + ethanolamine. The enzyme catalyses a 1-acyl-sn-glycero-3-phosphocholine = a 1-acyl-sn-glycero-2,3-cyclic phosphate + choline. It carries out the reaction a 1-acyl-sn-glycero-3-phosphoethanolamine = a 1-acyl-sn-glycero-2,3-cyclic phosphate + ethanolamine. In terms of biological role, dermonecrotic toxins cleave the phosphodiester linkage between the phosphate and headgroup of certain phospholipids (sphingolipid and lysolipid substrates), forming an alcohol (often choline) and a cyclic phosphate. This toxin acts on sphingomyelin (SM). It may also act on ceramide phosphoethanolamine (CPE), lysophosphatidylcholine (LPC) and lysophosphatidylethanolamine (LPE), but not on lysophosphatidylserine (LPS), and lysophosphatidylglycerol (LPG). It acts by transphosphatidylation, releasing exclusively cyclic phosphate products as second products. Induces dermonecrosis, hemolysis, increased vascular permeability, edema, inflammatory response, and platelet aggregation. The chain is Dermonecrotic toxin SdSicTox-betaIIB1bii from Sicarius cf. damarensis (strain GJB-2008) (Six-eyed sand spider).